Consider the following 115-residue polypeptide: Class I hydrophobin 21 (115 aa).

The signal sequence occupies residues 1 to 20 (MFAAPATMLVLAALAALSSA). 4 cysteine pairs are disulfide-bonded: Cys30-Cys93, Cys37-Cys87, Cys38-Cys77, and Cys94-Cys107.

The protein belongs to the fungal hydrophobin family. In terms of assembly, self-assembles to form functional amyloid fibrils called rodlets. Self-assembly into fibrillar rodlets occurs spontaneously at hydrophobic:hydrophilic interfaces and the rodlets further associate laterally to form amphipathic monolayers.

It is found in the secreted. The protein localises to the cell wall. Aerial growth, conidiation, and dispersal of filamentous fungi in the environment rely upon a capability of their secreting small amphipathic proteins called hydrophobins (HPBs) with low sequence identity. Class I can self-assemble into an outermost layer of rodlet bundles on aerial cell surfaces, conferring cellular hydrophobicity that supports fungal growth, development and dispersal; whereas Class II form highly ordered films at water-air interfaces through intermolecular interactions but contribute nothing to the rodlet structure. In Pleurotus ostreatus (strain PC15) (Oyster mushroom), this protein is Class I hydrophobin 21.